The primary structure comprises 431 residues: Adenylosuccinate lyase (431 aa).

Residues arginine 4–tyrosine 5, arginine 67–aspartate 69, and threonine 93–serine 94 contribute to the N(6)-(1,2-dicarboxyethyl)-AMP site. Histidine 141 (proton donor/acceptor) is an active-site residue. Glutamine 212 lines the N(6)-(1,2-dicarboxyethyl)-AMP pocket. Serine 262 functions as the Proton donor/acceptor in the catalytic mechanism. N(6)-(1,2-dicarboxyethyl)-AMP is bound by residues serine 263, lysine 268–asparagine 270, asparagine 276, and serine 307–isoleucine 311.

It belongs to the lyase 1 family. Adenylosuccinate lyase subfamily. In terms of assembly, homodimer and homotetramer. Residues from neighboring subunits contribute catalytic and substrate-binding residues to each active site.

It carries out the reaction N(6)-(1,2-dicarboxyethyl)-AMP = fumarate + AMP. The catalysed reaction is (2S)-2-[5-amino-1-(5-phospho-beta-D-ribosyl)imidazole-4-carboxamido]succinate = 5-amino-1-(5-phospho-beta-D-ribosyl)imidazole-4-carboxamide + fumarate. Its pathway is purine metabolism; AMP biosynthesis via de novo pathway; AMP from IMP: step 2/2. It participates in purine metabolism; IMP biosynthesis via de novo pathway; 5-amino-1-(5-phospho-D-ribosyl)imidazole-4-carboxamide from 5-amino-1-(5-phospho-D-ribosyl)imidazole-4-carboxylate: step 2/2. In terms of biological role, catalyzes two reactions in de novo purine nucleotide biosynthesis. Catalyzes the breakdown of 5-aminoimidazole- (N-succinylocarboxamide) ribotide (SAICAR or 2-[5-amino-1-(5-phospho-beta-D-ribosyl)imidazole-4-carboxamido]succinate) to 5-aminoimidazole-4-carboxamide ribotide (AICAR or 5-amino-1-(5-phospho-beta-D-ribosyl)imidazole-4-carboxamide) and fumarate, and of adenylosuccinate (ADS or N(6)-(1,2-dicarboxyethyl)-AMP) to adenosine monophosphate (AMP) and fumarate. The sequence is that of Adenylosuccinate lyase (purB) from Staphylococcus haemolyticus (strain JCSC1435).